The following is an 883-amino-acid chain: MSTTSEIRRTFLDFFVKNGHQEVASSPLVPLNDPTLMFTNAGMVQFKNVFTGAETRPYHRATTSQKCVRAGGKHNDLDNVGYTARHHTFFEMLGNFSFGDYFKEQAIDFAWRLITEEYALPKDRLLVTVHTSDEDAAGLWRKVAGLPDERIIRIPTNDNFWAMGDTGPCGPCSEIFFDHGPKVAGGPPGSADENGDRFIEIWNLVFMQFEQLTVDQRVALPRPSIDTGMGLERVAAVLQGKHDNYDIDLMRALIEAIASAAGTDPDGPHKVSHRVIADHLRSACFLIADGVLPSNEGRGYVLRRIMRRAMRHAHMMGCVDPLMFKLVPALNREMADQFPELNRANALITETLKLEETRFKQMLDRGLKLLAEETGDLASGDSLPGPVAFKLYDTYGFPLDLTQDALRPRGIGVDTAGFDAAMARQREDARKSWTGSGDHATEAVWFDIRDRVGASEFLGYTSTDAEGAIVALVVDGKVVESAPADTEVAVIANQTPFYGESGGQMGDAGEIRLAEGGKVVVRDTAKKLGALHVHIGRVEGATIRVGQAARFVVDTERRDALRSHHSATHLLHEALRRRLGEHVTQKGSLVAPDRLRFDISHPKPLSAAEIRVVEDDVNREIRANAEITTQIMDPDSAIEAGAMALFGEKYGEEVRVVSMGRREPGANRPFSVELCGGTHARRTGDIGFFKIIGEGAVASGVRRIEAVTGQAAFEHIEAQDDLVSGAAQLLKVTPADLPGRIQALLDDRRRLERDLADARRKLATGGGGAAAPAVVEINGVKWVGRLLEDVPAKDLKGMVDEVKKQLGSGVVALIAVADGKASLVVGVTEDLVGRFDAVALVRAGAGAIGGKGGGGRPDMAQAGGPDGAQAGAALAAIEAALAG.

Zn(2+) is bound by residues His565, His569, Cys675, and His679.

The protein belongs to the class-II aminoacyl-tRNA synthetase family. Requires Zn(2+) as cofactor.

Its subcellular location is the cytoplasm. The enzyme catalyses tRNA(Ala) + L-alanine + ATP = L-alanyl-tRNA(Ala) + AMP + diphosphate. In terms of biological role, catalyzes the attachment of alanine to tRNA(Ala) in a two-step reaction: alanine is first activated by ATP to form Ala-AMP and then transferred to the acceptor end of tRNA(Ala). Also edits incorrectly charged Ser-tRNA(Ala) and Gly-tRNA(Ala) via its editing domain. The chain is Alanine--tRNA ligase from Rhodospirillum rubrum (strain ATCC 11170 / ATH 1.1.1 / DSM 467 / LMG 4362 / NCIMB 8255 / S1).